The following is a 374-amino-acid chain: Carbamoyl phosphate synthase small chain (374 aa).

The segment at 1 to 183 (MVLADGQMIW…QNGYSVVDNQ (183 aa)) is CPSase. L-glutamine is bound by residues Ser41, Gly235, and Gly237. In terms of domain architecture, Glutamine amidotransferase type-1 spans 187 to 374 (HVVAIDYGLK…FIDLIAKERP (188 aa)). Cys264 acts as the Nucleophile in catalysis. Positions 265, 268, 306, 308, and 309 each coordinate L-glutamine. Active-site residues include His348 and Glu350.

It belongs to the CarA family. Composed of two chains; the small (or glutamine) chain promotes the hydrolysis of glutamine to ammonia, which is used by the large (or ammonia) chain to synthesize carbamoyl phosphate. Tetramer of heterodimers (alpha,beta)4.

The enzyme catalyses hydrogencarbonate + L-glutamine + 2 ATP + H2O = carbamoyl phosphate + L-glutamate + 2 ADP + phosphate + 2 H(+). It carries out the reaction L-glutamine + H2O = L-glutamate + NH4(+). It participates in amino-acid biosynthesis; L-arginine biosynthesis; carbamoyl phosphate from bicarbonate: step 1/1. It functions in the pathway pyrimidine metabolism; UMP biosynthesis via de novo pathway; (S)-dihydroorotate from bicarbonate: step 1/3. Its function is as follows. Small subunit of the glutamine-dependent carbamoyl phosphate synthetase (CPSase). CPSase catalyzes the formation of carbamoyl phosphate from the ammonia moiety of glutamine, carbonate, and phosphate donated by ATP, constituting the first step of 2 biosynthetic pathways, one leading to arginine and/or urea and the other to pyrimidine nucleotides. The small subunit (glutamine amidotransferase) binds and cleaves glutamine to supply the large subunit with the substrate ammonia. The chain is Carbamoyl phosphate synthase small chain from Zymomonas mobilis subsp. mobilis (strain ATCC 31821 / ZM4 / CP4).